We begin with the raw amino-acid sequence, 690 residues long: Protein O-mannosyl-transferase F38B6.6 (690 aa).

The disordered stretch occupies residues 1–24 (MKKHLHHKVSGSCDPGDRSPKEKG). At 1 to 32 (MKKHLHHKVSGSCDPGDRSPKEKGRSQGIRNL) the chain is on the cytoplasmic side. Residues 15–24 (PGDRSPKEKG) show a composition bias toward basic and acidic residues. Residues 33 to 53 (LILISLSIIPYLSCLGGDFVF) form a helical membrane-spanning segment. Over 54 to 110 (DDAESIVNNPIVNGKDPLLQIFSRDFWGRSISSSNSHKSYRPVTTFTFWLNYKLHET) the chain is Extracellular. The helical transmembrane segment at 111–131 (STLGYHVVNIICHTVATLVFY) threads the bilayer. At 132 to 138 (KLGKQLE) the chain is on the cytoplasmic side. The chain crosses the membrane as a helical span at residues 139 to 159 (HIFDFFNIAFSASILFAVHPV). At 160-166 (HTEAVAN) the chain is on the extracellular side. N166 is a glycosylation site (N-linked (GlcNAc...) asparagine). A helical transmembrane segment spans residues 167-187 (ITGRAELLMTIFSLAALILHV). Over 188-234 (KNREINCKFVLLVILSTLSKEQGLMTIPIAICIDFLAHRSCRSNFVR) the chain is Cytoplasmic. The chain crosses the membrane as a helical span at residues 235 to 255 (MICLLVAIGFLRMMVNGFEAA). Residues 256–273 (KFTKLDNPTAFLNSKFYR) are Extracellular-facing. The chain crosses the membrane as a helical span at residues 274-294 (MINYTYIWLYHAYLLVIPVNL). Over 295–307 (CFDYSMGCISSIT) the chain is Cytoplasmic. The chain crosses the membrane as a helical span at residues 308–328 (TMWDLRALSPVLIFTIVIIGV). Topologically, residues 329 to 341 (KFQNECRAFTLSS) are extracellular. A helical membrane pass occupies residues 342–362 (LMGIISFLPASNIFFTVGFSI). Residues 363-365 (AER) are Cytoplasmic-facing. Residues 366–386 (VLYLPSAGFCLLCAIIFKKLS) traverse the membrane as a helical segment. Residues 387-690 (VHFKNADVLS…EHNCYNSTLP (304 aa)) lie on the Extracellular side of the membrane. TPR repeat units follow at residues 398–431 (TLILLLISKTYRRSGEWKTELSLYSSGLSVCPTN), 432–465 (AKIHYNLGKVLGDNGLTKDAEKNYWNAIKLDPSY), 466–499 (EQALNNLGNLLEKSGDSKTAESLLARAVTLRPSF), 500–533 (AVAWMNLGISQMNLKKYYEAEKSLKNSLLIRPNS), and 534–567 (AHCLFNLGVLYQRTNRDEMAMSAWKNATRIDPSH). N-linked (GlcNAc...) asparagine glycans are attached at residues N559, N600, and N617. TPR repeat units lie at residues 602 to 635 (SRVHMQIGSCHAKHSNFTAAENHIKSAIDLNPTS) and 636 to 669 (VLFHANLGILYQRMSRHKEAESQYRIVLALDSKN). N-linked (GlcNAc...) asparagine glycosylation is present at N686.

This sequence belongs to the TMTC family.

Its subcellular location is the membrane. The protein resides in the endoplasmic reticulum. The catalysed reaction is a di-trans,poly-cis-dolichyl beta-D-mannosyl phosphate + L-seryl-[protein] = 3-O-(alpha-D-mannosyl)-L-seryl-[protein] + a di-trans,poly-cis-dolichyl phosphate + H(+). The enzyme catalyses a di-trans,poly-cis-dolichyl beta-D-mannosyl phosphate + L-threonyl-[protein] = 3-O-(alpha-D-mannosyl)-L-threonyl-[protein] + a di-trans,poly-cis-dolichyl phosphate + H(+). The protein operates within protein modification; protein glycosylation. Functionally, transfers mannosyl residues to the hydroxyl group of serine or threonine residues. The chain is Protein O-mannosyl-transferase F38B6.6 from Caenorhabditis elegans.